We begin with the raw amino-acid sequence, 80 residues long: Cell division protein ZapB (80 aa).

Residues 3–80 (FEVLEKLEAK…ALLGKMEDVE (78 aa)) adopt a coiled-coil conformation.

The protein belongs to the ZapB family. As to quaternary structure, homodimer. The ends of the coiled-coil dimer bind to each other, forming polymers. Interacts with FtsZ.

The protein resides in the cytoplasm. Its function is as follows. Non-essential, abundant cell division factor that is required for proper Z-ring formation. It is recruited early to the divisome by direct interaction with FtsZ, stimulating Z-ring assembly and thereby promoting cell division earlier in the cell cycle. Its recruitment to the Z-ring requires functional FtsA or ZipA. The protein is Cell division protein ZapB of Vibrio vulnificus (strain CMCP6).